The primary structure comprises 493 residues: Galactose-1-phosphate uridylyltransferase (493 aa).

Belongs to the galactose-1-phosphate uridylyltransferase type 2 family.

The protein resides in the cytoplasm. It catalyses the reaction alpha-D-galactose 1-phosphate + UDP-alpha-D-glucose = alpha-D-glucose 1-phosphate + UDP-alpha-D-galactose. It participates in carbohydrate metabolism; galactose metabolism. The polypeptide is Galactose-1-phosphate uridylyltransferase (Streptococcus pneumoniae (strain Hungary19A-6)).